The primary structure comprises 193 residues: dTTP/UTP pyrophosphatase (193 aa).

Asp-77 functions as the Proton acceptor in the catalytic mechanism.

The protein belongs to the Maf family. YhdE subfamily. It depends on a divalent metal cation as a cofactor.

The protein localises to the cytoplasm. The enzyme catalyses dTTP + H2O = dTMP + diphosphate + H(+). It catalyses the reaction UTP + H2O = UMP + diphosphate + H(+). Nucleoside triphosphate pyrophosphatase that hydrolyzes dTTP and UTP. May have a dual role in cell division arrest and in preventing the incorporation of modified nucleotides into cellular nucleic acids. The polypeptide is dTTP/UTP pyrophosphatase (Bacteroides fragilis (strain YCH46)).